The sequence spans 430 residues: tRNA(Ile)-lysidine synthase (430 aa).

Serine 27–serine 32 contacts ATP.

This sequence belongs to the tRNA(Ile)-lysidine synthase family.

It is found in the cytoplasm. It carries out the reaction cytidine(34) in tRNA(Ile2) + L-lysine + ATP = lysidine(34) in tRNA(Ile2) + AMP + diphosphate + H(+). In terms of biological role, ligates lysine onto the cytidine present at position 34 of the AUA codon-specific tRNA(Ile) that contains the anticodon CAU, in an ATP-dependent manner. Cytidine is converted to lysidine, thus changing the amino acid specificity of the tRNA from methionine to isoleucine. In Rickettsia felis (strain ATCC VR-1525 / URRWXCal2) (Rickettsia azadi), this protein is tRNA(Ile)-lysidine synthase.